The sequence spans 250 residues: MADS-box transcription factor 47 (250 aa).

The segment covering 1–10 (MAGGGGGGGR) has biased composition (gly residues). Disordered stretches follow at residues 1 to 20 (MAGG…AATG) and 196 to 250 (SRME…FSSK). Residues 11-20 (GEGEGRAATG) show a composition bias toward basic and acidic residues. The MADS-box domain maps to 20–80 (GKRERIAIRR…GKLFQFASTS (61 aa)). The 93-residue stretch at 106–198 (QGEDSSTCAR…QLQVSRMSRM (93 aa)) folds into the K-box domain. Over residues 214 to 224 (GQSSESVTNAS) the composition is skewed to polar residues.

As to quaternary structure, may interact with MADS18. As to expression, expressed in roots, shoots and developing panicles. Expressed in mature stems and leaves, flowering panicles, developing seeds, and mature seeds.

It is found in the nucleus. In terms of biological role, transcription factor that modulates expressions of multiple genes involved in cell signaling and gene transcription. Plays a negative regulatory role in brassinosteroid signaling. This chain is MADS-box transcription factor 47, found in Oryza sativa subsp. japonica (Rice).